The chain runs to 356 residues: Protein-glutamate methylesterase/protein-glutamine glutaminase 2 (356 aa).

The Response regulatory domain occupies 7 to 124 (KVLCVDDSAL…RDGLMEYTDT (118 aa)). Asp-58 is modified (4-aspartylphosphate). Residues 157–349 (LLSTEKLIIL…QRVMARLATY (193 aa)) enclose the CheB-type methylesterase domain. Active-site residues include Ser-169, His-195, and Asp-291.

This sequence belongs to the CheB family. Post-translationally, phosphorylated by CheA. Phosphorylation of the N-terminal regulatory domain activates the methylesterase activity.

It is found in the cytoplasm. The catalysed reaction is [protein]-L-glutamate 5-O-methyl ester + H2O = L-glutamyl-[protein] + methanol + H(+). The enzyme catalyses L-glutaminyl-[protein] + H2O = L-glutamyl-[protein] + NH4(+). In terms of biological role, involved in chemotaxis. Part of a chemotaxis signal transduction system that modulates chemotaxis in response to various stimuli. Catalyzes the demethylation of specific methylglutamate residues introduced into the chemoreceptors (methyl-accepting chemotaxis proteins or MCP) by CheR. Also mediates the irreversible deamidation of specific glutamine residues to glutamic acid. The polypeptide is Protein-glutamate methylesterase/protein-glutamine glutaminase 2 (Cupriavidus pinatubonensis (strain JMP 134 / LMG 1197) (Cupriavidus necator (strain JMP 134))).